A 387-amino-acid polypeptide reads, in one-letter code: MGHPPVSPSAPAPAGTTAIPGLIPDLVAGTPWPRWALIAGALAAGVLLVSCLLCAACCCCRRHRKKPRDKESVGLGSARGTTTTHLVQPDVDGLESSPGDAQQWGCLQLSLEFDFGSQEIRVGLRQAADLRPGGTVDPYARVSVSTQAGHRHETKVHRGTLCPVFDETCCFHIPQAELPGATLQVQLFNFKRFSGHEPLGELRLPLGTVDLQHVLEHWYLLGPPAATQPEQVGELCFSLRYVPSSGRLTVVVLEARGLRPGLAEPYVKVQLMLNQRKWKKRKTATKKGTAAPYFNEAFTFLVPFSQVQNVDLVLAVWDRSLPLRTEPVGKVHLGARASGQPLQHWADMLAHARRPIAQRHPLRPAREVDRMLALQPRLRLRLPLPHS.

The Extracellular portion of the chain corresponds to 1–34; that stretch reads MGHPPVSPSAPAPAGTTAIPGLIPDLVAGTPWPR. Residues 35 to 55 traverse the membrane as a helical; Signal-anchor for type III membrane protein segment; that stretch reads WALIAGALAAGVLLVSCLLCA. Residues 56–387 are Cytoplasmic-facing; it reads ACCCCRRHRK…LRLRLPLPHS (332 aa). The segment at 70–99 is disordered; it reads KESVGLGSARGTTTTHLVQPDVDGLESSPG. 2 consecutive C2 domains span residues 103–219 and 231–346; these read QWGC…EHWY and QVGE…QHWA.

The protein belongs to the synaptotagmin family. In terms of assembly, homodimer or homooligomer. Homodimerization and homooligomerization do not depend on Ca(2+). Interacts with SYNCRIP isoform 2 C-terminus. Binds inositol 1,3,4,5-tetrakisphosphate (IP4). Binds to AP2 in a Ca(2+)-independent manner. Interacts with STX1A, STX1B and STX2; the interaction is Ca(2+)-dependent.

It is found in the cell membrane. It localises to the cytoplasmic vesicle. The protein localises to the secretory vesicle. The protein resides in the acrosome. Involved in the trafficking and exocytosis of secretory vesicles in non-neuronal tissues. Mediates Ca(2+)-regulation of exocytosis acrosomal reaction in sperm. May mediate Ca(2+)-regulation of exocytosis in insulin secreted cells. The chain is Synaptotagmin-8 (SYT8) from Homo sapiens (Human).